Reading from the N-terminus, the 552-residue chain is Cation/acetate symporter ActP (552 aa).

Helical transmembrane passes span 6–26 (LLAV…AIAG), 35–55 (MEAI…TYWA), 78–98 (GLAM…SALV), 103–123 (FDGL…LFLI), 151–171 (LSAC…MVGA), 185–205 (VAVV…GMLA), 208–228 (WVQI…AIMV), 264–284 (ISAL…PHIL), 305–325 (GLMG…ILLV), 357–377 (LFLG…VAGL), 407–427 (VSKI…ILFE), 431–451 (IAFM…PIIL), 467–487 (GGWL…TIWV), and 496–516 (IFPY…GTWL).

This sequence belongs to the sodium:solute symporter (SSF) (TC 2.A.21) family.

The protein resides in the cell inner membrane. Functionally, transports acetate. In Erwinia tasmaniensis (strain DSM 17950 / CFBP 7177 / CIP 109463 / NCPPB 4357 / Et1/99), this protein is Cation/acetate symporter ActP.